Here is a 698-residue protein sequence, read N- to C-terminus: Elongation factor G 1 (698 aa).

The 283-residue stretch at 8–290 (ERYRNIGICA…AVVEFLPAPV (283 aa)) folds into the tr-type G domain. Residues 17–24 (AHVDAGKT), 88–92 (DTPGH), and 142–145 (NKMD) contribute to the GTP site.

This sequence belongs to the TRAFAC class translation factor GTPase superfamily. Classic translation factor GTPase family. EF-G/EF-2 subfamily.

It localises to the cytoplasm. Catalyzes the GTP-dependent ribosomal translocation step during translation elongation. During this step, the ribosome changes from the pre-translocational (PRE) to the post-translocational (POST) state as the newly formed A-site-bound peptidyl-tRNA and P-site-bound deacylated tRNA move to the P and E sites, respectively. Catalyzes the coordinated movement of the two tRNA molecules, the mRNA and conformational changes in the ribosome. This Shewanella oneidensis (strain ATCC 700550 / JCM 31522 / CIP 106686 / LMG 19005 / NCIMB 14063 / MR-1) protein is Elongation factor G 1.